The chain runs to 504 residues: D-alanine--D-alanyl carrier protein ligase (504 aa).

152 to 153 (TS) serves as a coordination point for ATP. Asp-197 is a binding site for D-alanine. 292 to 297 (NTYGPT) is an ATP binding site. Val-301 provides a ligand contact to D-alanine. ATP-binding positions include Asp-383, 394-397 (YNGR), and Lys-492. Lys-492 contributes to the D-alanine binding site.

Belongs to the ATP-dependent AMP-binding enzyme family. DltA subfamily.

The protein localises to the cytoplasm. The catalysed reaction is holo-[D-alanyl-carrier protein] + D-alanine + ATP = D-alanyl-[D-alanyl-carrier protein] + AMP + diphosphate. The protein operates within cell wall biogenesis; lipoteichoic acid biosynthesis. Functionally, catalyzes the first step in the D-alanylation of lipoteichoic acid (LTA), the activation of D-alanine and its transfer onto the D-alanyl carrier protein (Dcp) DltC. In an ATP-dependent two-step reaction, forms a high energy D-alanyl-AMP intermediate, followed by transfer of the D-alanyl residue as a thiol ester to the phosphopantheinyl prosthetic group of the Dcp. D-alanylation of LTA plays an important role in modulating the properties of the cell wall in Gram-positive bacteria, influencing the net charge of the cell wall. In Bacillus thuringiensis (strain Al Hakam), this protein is D-alanine--D-alanyl carrier protein ligase.